A 472-amino-acid polypeptide reads, in one-letter code: Siroheme synthase 2 (472 aa).

Residues 1-204 (MDYFPIFCQL…EDQVQVEQHV (204 aa)) form a precorrin-2 dehydrogenase /sirohydrochlorin ferrochelatase region. NAD(+)-binding positions include 22–23 (EV) and 43–44 (CE). Phosphoserine is present on Ser-128. A uroporphyrinogen-III C-methyltransferase region spans residues 216–472 (GEVVLVGAGP…GMKEQVERVG (257 aa)). An S-adenosyl-L-methionine-binding site is contributed by Pro-225. The Proton acceptor role is filled by Asp-248. Lys-270 functions as the Proton donor in the catalytic mechanism. S-adenosyl-L-methionine is bound by residues 301 to 303 (GGD), Ile-306, 331 to 332 (TA), Met-382, and Gly-411.

It in the N-terminal section; belongs to the precorrin-2 dehydrogenase / sirohydrochlorin ferrochelatase family. This sequence in the C-terminal section; belongs to the precorrin methyltransferase family.

The catalysed reaction is uroporphyrinogen III + 2 S-adenosyl-L-methionine = precorrin-2 + 2 S-adenosyl-L-homocysteine + H(+). It catalyses the reaction precorrin-2 + NAD(+) = sirohydrochlorin + NADH + 2 H(+). It carries out the reaction siroheme + 2 H(+) = sirohydrochlorin + Fe(2+). Its pathway is cofactor biosynthesis; adenosylcobalamin biosynthesis; precorrin-2 from uroporphyrinogen III: step 1/1. It functions in the pathway cofactor biosynthesis; adenosylcobalamin biosynthesis; sirohydrochlorin from precorrin-2: step 1/1. The protein operates within porphyrin-containing compound metabolism; siroheme biosynthesis; precorrin-2 from uroporphyrinogen III: step 1/1. It participates in porphyrin-containing compound metabolism; siroheme biosynthesis; siroheme from sirohydrochlorin: step 1/1. Its pathway is porphyrin-containing compound metabolism; siroheme biosynthesis; sirohydrochlorin from precorrin-2: step 1/1. Multifunctional enzyme that catalyzes the SAM-dependent methylations of uroporphyrinogen III at position C-2 and C-7 to form precorrin-2 via precorrin-1. Then it catalyzes the NAD-dependent ring dehydrogenation of precorrin-2 to yield sirohydrochlorin. Finally, it catalyzes the ferrochelation of sirohydrochlorin to yield siroheme. In Yersinia enterocolitica serotype O:8 / biotype 1B (strain NCTC 13174 / 8081), this protein is Siroheme synthase 2.